A 135-amino-acid chain; its full sequence is Small ribosomal subunit protein uS9 (135 aa).

This sequence belongs to the universal ribosomal protein uS9 family.

The protein is Small ribosomal subunit protein uS9 (rps9) of Archaeoglobus fulgidus (strain ATCC 49558 / DSM 4304 / JCM 9628 / NBRC 100126 / VC-16).